The sequence spans 239 residues: ATP-dependent dethiobiotin synthetase BioD (239 aa).

Residue 22 to 27 (GIGKTV) coordinates ATP. A Mg(2+)-binding site is contributed by Thr26. The active site involves Lys47. Residue Thr51 coordinates substrate. ATP is bound by residues Asp59, 124-127 (EGVG), and 184-185 (NR). Positions 59 and 124 each coordinate Mg(2+).

The protein belongs to the dethiobiotin synthetase family. As to quaternary structure, homodimer. The cofactor is Mg(2+).

The protein localises to the cytoplasm. The enzyme catalyses (7R,8S)-7,8-diammoniononanoate + CO2 + ATP = (4R,5S)-dethiobiotin + ADP + phosphate + 3 H(+). The protein operates within cofactor biosynthesis; biotin biosynthesis; biotin from 7,8-diaminononanoate: step 1/2. In terms of biological role, catalyzes a mechanistically unusual reaction, the ATP-dependent insertion of CO2 between the N7 and N8 nitrogen atoms of 7,8-diaminopelargonic acid (DAPA, also called 7,8-diammoniononanoate) to form a ureido ring. This is ATP-dependent dethiobiotin synthetase BioD from Chlorobaculum tepidum (strain ATCC 49652 / DSM 12025 / NBRC 103806 / TLS) (Chlorobium tepidum).